The following is a 444-amino-acid chain: Maturase K (444 aa).

The protein belongs to the intron maturase 2 family. MatK subfamily.

It localises to the plastid. The protein localises to the chloroplast. Its function is as follows. Usually encoded in the trnK tRNA gene intron. Probably assists in splicing its own and other chloroplast group II introns. The protein is Maturase K of Chamaecyparis lawsoniana (Lawson false cypress).